Reading from the N-terminus, the 186-residue chain is Protein C (186 aa).

Residues 1–15 are compositionally biased toward polar residues; it reads MSKTDWNASGLSRPS. Residues 1-44 form a disordered region; sequence MSKTDWNASGLSRPSPSAHWPSRKLWQHGQKYQTTQDRSEPPAG.

The protein belongs to the morbillivirus protein C family. As to quaternary structure, interacts with the phosphoprotein (via C-terminus); this interaction allows C to associate with the ribonucleocapsid.

The protein resides in the host nucleus. It is found in the host cytoplasmic vesicle. Ribonucleocapsid-associated protein that interacts with the phosphoprotein (P), thereby increasing replication accuracy and processivity of the polymerase complex. In Homo sapiens (Human), this protein is Protein C (P/V/C).